Here is a 295-residue protein sequence, read N- to C-terminus: 4-hydroxy-tetrahydrodipicolinate synthase (295 aa).

Thr-46 provides a ligand contact to pyruvate. Tyr-134 acts as the Proton donor/acceptor in catalysis. Lys-162 acts as the Schiff-base intermediate with substrate in catalysis. Residue Ile-205 participates in pyruvate binding.

It belongs to the DapA family. As to quaternary structure, homotetramer; dimer of dimers.

It localises to the cytoplasm. It catalyses the reaction L-aspartate 4-semialdehyde + pyruvate = (2S,4S)-4-hydroxy-2,3,4,5-tetrahydrodipicolinate + H2O + H(+). It participates in amino-acid biosynthesis; L-lysine biosynthesis via DAP pathway; (S)-tetrahydrodipicolinate from L-aspartate: step 3/4. Functionally, catalyzes the condensation of (S)-aspartate-beta-semialdehyde [(S)-ASA] and pyruvate to 4-hydroxy-tetrahydrodipicolinate (HTPA). The polypeptide is 4-hydroxy-tetrahydrodipicolinate synthase (Anaeromyxobacter sp. (strain K)).